The following is a 61-amino-acid chain: Sperm protamine P1 (61 aa).

A disordered region spans residues 1–61 (MARYRHSRSR…RRYSRRRRRY (61 aa)).

This sequence belongs to the protamine P1 family. Testis.

Its subcellular location is the nucleus. The protein resides in the chromosome. In terms of biological role, protamines substitute for histones in the chromatin of sperm during the haploid phase of spermatogenesis. They compact sperm DNA into a highly condensed, stable and inactive complex. The polypeptide is Sperm protamine P1 (PRM1) (Macropus giganteus (Eastern gray kangaroo)).